We begin with the raw amino-acid sequence, 240 residues long: UDP-2,3-diacylglucosamine hydrolase (240 aa).

Mn(2+) is bound by residues aspartate 8, histidine 10, aspartate 41, asparagine 79, and histidine 114. 79–80 (NR) contacts substrate. Substrate is bound by residues aspartate 122, serine 160, asparagine 164, lysine 167, and histidine 195. Histidine 195 and histidine 197 together coordinate Mn(2+).

This sequence belongs to the LpxH family. Mn(2+) is required as a cofactor.

The protein localises to the cell inner membrane. The catalysed reaction is UDP-2-N,3-O-bis[(3R)-3-hydroxytetradecanoyl]-alpha-D-glucosamine + H2O = 2-N,3-O-bis[(3R)-3-hydroxytetradecanoyl]-alpha-D-glucosaminyl 1-phosphate + UMP + 2 H(+). It functions in the pathway glycolipid biosynthesis; lipid IV(A) biosynthesis; lipid IV(A) from (3R)-3-hydroxytetradecanoyl-[acyl-carrier-protein] and UDP-N-acetyl-alpha-D-glucosamine: step 4/6. Hydrolyzes the pyrophosphate bond of UDP-2,3-diacylglucosamine to yield 2,3-diacylglucosamine 1-phosphate (lipid X) and UMP by catalyzing the attack of water at the alpha-P atom. Involved in the biosynthesis of lipid A, a phosphorylated glycolipid that anchors the lipopolysaccharide to the outer membrane of the cell. This Escherichia coli O17:K52:H18 (strain UMN026 / ExPEC) protein is UDP-2,3-diacylglucosamine hydrolase.